The sequence spans 180 residues: O-acetyl-ADP-ribose deacetylase (180 aa).

The region spanning Met1–Gly175 is the Macro domain. Substrate is bound by residues Asp11 to Ile12, Asn25, Gly33 to Asp35, and Ser122 to Tyr126. Asp35 (proton acceptor) is an active-site residue.

Belongs to the MacroD-type family. YmdB subfamily. As to quaternary structure, homodimer. Interacts with RNase III.

The catalysed reaction is 3''-O-acetyl-ADP-D-ribose + H2O = ADP-D-ribose + acetate + H(+). The enzyme catalyses 2''-O-acetyl-ADP-D-ribose + H2O = ADP-D-ribose + acetate + H(+). Functionally, deacetylates O-acetyl-ADP ribose to yield ADP-ribose and free acetate. Down-regulates ribonuclease 3 (RNase III) activity. Acts by interacting directly with the region of the ribonuclease that is required for dimerization/activation. The protein is O-acetyl-ADP-ribose deacetylase of Enterobacter sp. (strain 638).